The sequence spans 1043 residues: Beta-klotho (1043 aa).

Over 1–994 (MKTGCAAGSP…ICSFLVEKKP (994 aa)) the chain is Extracellular. Glycosyl hydrolase-1 regions lie at residues 77-506 (LYDT…DNGF) and 515-965 (MKGR…SSGL). Residues Asn-84, Asn-122, Asn-161, Asn-211, Asn-262, Asn-308, Asn-389, Asn-552, Asn-609, Asn-700, Asn-704, and Asn-837 are each glycosylated (N-linked (GlcNAc...) asparagine). A helical membrane pass occupies residues 995–1015 (LIFFGCCFISTLAVLLSITVF). Over 1016–1043 (HHQKRRKFQKARNLQNIPLKKGHSRVFS) the chain is Cytoplasmic.

Belongs to the glycosyl hydrolase 1 family. Klotho subfamily. As to quaternary structure, interacts with FGF19; this interaction is direct. Interacts (via C-terminus) with FGF21; this interaction is direct. Interacts with FGFR1 and FGFR4. As to expression, present in liver, muscle and white adipose tissue, but not in kidney (at protein level). Expressed in liver and pancreas, and at lower levels in skin, stomach, skeletal muscle, small intestine and lung.

The protein localises to the cell membrane. In terms of biological role, contributes to the transcriptional repression of cholesterol 7-alpha-hydroxylase (CYP7A1), the rate-limiting enzyme in bile acid synthesis. Probably inactive as a glycosidase. Increases the ability of FGFR1 and FGFR4 to bind FGF21. In Mus musculus (Mouse), this protein is Beta-klotho (Klb).